A 332-amino-acid polypeptide reads, in one-letter code: Cyclin-dependent kinase 1 (332 aa).

Residues 22–312 (FTKLEKIGEG…AKKALVHPYF (291 aa)) enclose the Protein kinase domain. ATP contacts are provided by residues 28–36 (IGEGTYGVV) and lysine 51. At threonine 32 the chain carries Phosphothreonine. Tyrosine 33 is modified (phosphotyrosine). The active-site Proton acceptor is aspartate 146.

Belongs to the protein kinase superfamily. CMGC Ser/Thr protein kinase family. CDC2/CDKX subfamily. In terms of assembly, forms a stable but non-covalent complex with a regulatory subunit and with a cyclin. Interacts with cks-1. In terms of processing, phosphorylated.

Its subcellular location is the nucleus. It localises to the cytoplasm. It is found in the cytoskeleton. The protein localises to the microtubule organizing center. The protein resides in the centrosome. Its subcellular location is the chromosome. The catalysed reaction is L-seryl-[protein] + ATP = O-phospho-L-seryl-[protein] + ADP + H(+). It catalyses the reaction L-threonyl-[protein] + ATP = O-phospho-L-threonyl-[protein] + ADP + H(+). The enzyme catalyses [DNA-directed RNA polymerase] + ATP = phospho-[DNA-directed RNA polymerase] + ADP + H(+). With respect to regulation, phosphorylation both activates and inactivates the enzyme depending on the site of phosphorylation. Plays a key role in the control of the eukaryotic cell cycle. Required for entry into S-phase and mitosis. Acts as a component of the kinase complex that phosphorylates the repetitive C-terminus of RNA polymerase II. May function in concert with npp-16 to arrest prophase blastomeres in response to anoxia. This Caenorhabditis elegans protein is Cyclin-dependent kinase 1 (cdk-1).